We begin with the raw amino-acid sequence, 122 residues long: Large ribosomal subunit protein uL14c (122 aa).

Belongs to the universal ribosomal protein uL14 family. Part of the 50S ribosomal subunit.

It localises to the plastid. The protein localises to the chloroplast. Functionally, binds to 23S rRNA. This Phalaenopsis aphrodite subsp. formosana (Moth orchid) protein is Large ribosomal subunit protein uL14c.